The chain runs to 743 residues: MLNVVSKTIDLGDGRSIKIETGKLAKQADGAVTVTMGNTVLLATVCAAKDANPGCDFMPLQVEYKEKYSAIGRFPGGFTRREGKASDYEILTCRLVDRALRPLFPDNYHAEVFVNVILFSADGEDMPDALAGLAASAALAVSDIPFNGPISEVRVARVDGRYIVNPTFEQLERADIDLMVGATMDNIMMVEGEMDEVQESEMLEGIRVAHEAIKVQCKAQLELSEAVGKLQKREYSHEVNDEDLRKKVHDECYARAYEVATSGTGKHERGEAFEKIVEEFKAQYTEEELAEKAEMIARYYHDVEKEAMRRAILDEGKRLDGRKATEIRPIWIETDCLPGPHGSAIFTRGETQSLTTVTLGTKSDEKLVDDVLNYTKERFLLHYNFPPFSTGEARPQRGVGRREIGHGNLAHRALKRMIPTDYPYVVRVISDILESNGSSSMATVCAGTLALRDAGVQIRKPVSGIAMGLISENQGKNYAILSDILGDEDHLGDMDFKVTGTKDGITATQMDIKVDGLSYEILENALEQAKQGRLHILGKIMEAQPETRDDLKPHAPRIEKMHIGKEFIGAVIGPGGKIIQGIQEKSGATVNIEEVDGMGVIEISGTNKPCIDAAIGMIKGIVAMPEVGETYPGKITSVMPYGCFVEFLPGKEGLLHISEVDWKRFETIEDTNLKEGESINVKLLDIDPKTGKFKLSRKVLLEKPEGYVEPQPRERRERREGGREGGRNFERRGGDRDHREPRG.

Mg(2+) is bound by residues Asp489 and Asp495. The KH domain occupies 556–618 (PRIEKMHIGK…PCIDAAIGMI (63 aa)). The S1 motif domain maps to 628 to 698 (GETYPGKITS…KTGKFKLSRK (71 aa)). Residues 704–743 (PEGYVEPQPRERRERREGGREGGRNFERRGGDRDHREPRG) form a disordered region.

Belongs to the polyribonucleotide nucleotidyltransferase family. It depends on Mg(2+) as a cofactor.

It localises to the cytoplasm. The catalysed reaction is RNA(n+1) + phosphate = RNA(n) + a ribonucleoside 5'-diphosphate. Its function is as follows. Involved in mRNA degradation. Catalyzes the phosphorolysis of single-stranded polyribonucleotides processively in the 3'- to 5'-direction. The sequence is that of Polyribonucleotide nucleotidyltransferase from Porphyromonas gingivalis (strain ATCC 33277 / DSM 20709 / CIP 103683 / JCM 12257 / NCTC 11834 / 2561).